We begin with the raw amino-acid sequence, 173 residues long: Archaemetzincin (173 aa).

His-130 lines the Zn(2+) pocket. Glu-131 acts as the Proton acceptor in catalysis. Zn(2+) contacts are provided by His-134, His-140, Cys-141, Cys-146, Cys-165, and Cys-168.

The protein belongs to the peptidase M54 family. Monomer. It depends on Zn(2+) as a cofactor.

In terms of biological role, probable zinc metalloprotease whose natural substrate is unknown. The polypeptide is Archaemetzincin (Natronomonas pharaonis (strain ATCC 35678 / DSM 2160 / CIP 103997 / JCM 8858 / NBRC 14720 / NCIMB 2260 / Gabara) (Halobacterium pharaonis)).